The chain runs to 274 residues: Pantothenate synthetase (274 aa).

27-34 (MGALHKGH) serves as a coordination point for ATP. The active-site Proton donor is H34. Q58 contacts (R)-pantoate. Q58 provides a ligand contact to beta-alanine. 145–148 (GQKD) is a binding site for ATP. Residue Q151 coordinates (R)-pantoate. Residue 182–185 (LSSR) participates in ATP binding.

This sequence belongs to the pantothenate synthetase family. As to quaternary structure, homodimer.

It localises to the cytoplasm. It carries out the reaction (R)-pantoate + beta-alanine + ATP = (R)-pantothenate + AMP + diphosphate + H(+). It participates in cofactor biosynthesis; (R)-pantothenate biosynthesis; (R)-pantothenate from (R)-pantoate and beta-alanine: step 1/1. In terms of biological role, catalyzes the condensation of pantoate with beta-alanine in an ATP-dependent reaction via a pantoyl-adenylate intermediate. This Wolinella succinogenes (strain ATCC 29543 / DSM 1740 / CCUG 13145 / JCM 31913 / LMG 7466 / NCTC 11488 / FDC 602W) (Vibrio succinogenes) protein is Pantothenate synthetase.